The primary structure comprises 399 residues: Nicotinate phosphoribosyltransferase (399 aa).

Position 217 is a phosphohistidine; by autocatalysis (His217).

It belongs to the NAPRTase family. Transiently phosphorylated on a His residue during the reaction cycle. Phosphorylation strongly increases the affinity for substrates and increases the rate of nicotinate D-ribonucleotide production. Dephosphorylation regenerates the low-affinity form of the enzyme, leading to product release.

It catalyses the reaction nicotinate + 5-phospho-alpha-D-ribose 1-diphosphate + ATP + H2O = nicotinate beta-D-ribonucleotide + ADP + phosphate + diphosphate. The protein operates within cofactor biosynthesis; NAD(+) biosynthesis; nicotinate D-ribonucleotide from nicotinate: step 1/1. Catalyzes the synthesis of beta-nicotinate D-ribonucleotide from nicotinate and 5-phospho-D-ribose 1-phosphate at the expense of ATP. In Burkholderia cenocepacia (strain HI2424), this protein is Nicotinate phosphoribosyltransferase.